The chain runs to 116 residues: uncharacterized protein (116 aa).

The RRM domain occupies 6–83 (ATVHVGNLAP…RCIRVSPANF (78 aa)).

The protein localises to the cytoplasm. It localises to the nucleus. This is an uncharacterized protein from Schizosaccharomyces pombe (strain 972 / ATCC 24843) (Fission yeast).